We begin with the raw amino-acid sequence, 759 residues long: Spindle pole body component alp16 (759 aa).

Interacts with gamma-tubulin.

Its subcellular location is the cytoplasm. It is found in the cytoskeleton. The protein localises to the microtubule organizing center. The protein resides in the spindle pole body. Component of the gamma tubule complex that is required for the regulation of both interphase microtubules and mitotic bipolar spindles. The sequence is that of Spindle pole body component alp16 (alp16) from Schizosaccharomyces pombe (strain 972 / ATCC 24843) (Fission yeast).